The following is a 415-amino-acid chain: Serine hydroxymethyltransferase (415 aa).

Positions 1–10 (MERSHIRDVD) are enriched in basic and acidic residues. A disordered region spans residues 1–21 (MERSHIRDVDPDAADALSSER). Residues leucine 119 and 123-125 (GHL) each bind (6S)-5,6,7,8-tetrahydrofolate. N6-(pyridoxal phosphate)lysine is present on lysine 228. 353–355 (SAF) is a binding site for (6S)-5,6,7,8-tetrahydrofolate.

Belongs to the SHMT family. Homodimer. Pyridoxal 5'-phosphate serves as cofactor.

The protein resides in the cytoplasm. It catalyses the reaction (6R)-5,10-methylene-5,6,7,8-tetrahydrofolate + glycine + H2O = (6S)-5,6,7,8-tetrahydrofolate + L-serine. It functions in the pathway one-carbon metabolism; tetrahydrofolate interconversion. Its pathway is amino-acid biosynthesis; glycine biosynthesis; glycine from L-serine: step 1/1. Catalyzes the reversible interconversion of serine and glycine with tetrahydrofolate (THF) serving as the one-carbon carrier. Also exhibits THF-independent aldolase activity toward beta-hydroxyamino acids, producing glycine and aldehydes, via a retro-aldol mechanism. The chain is Serine hydroxymethyltransferase from Haloquadratum walsbyi (strain DSM 16790 / HBSQ001).